We begin with the raw amino-acid sequence, 80 residues long: Raniseptin-1 (80 aa).

Positions Met-1–Cys-22 are cleaved as a signal peptide. A propeptide spanning residues Glu-23–Glu-49 is cleaved from the precursor.

Belongs to the frog skin active peptide (FSAP) family. Dermaseptin subfamily. Expressed by the skin glands.

The protein localises to the secreted. Its function is as follows. Has antibacterial activity against the Gram-negative bacteria E.coli ATCC 25922 (MIC=5 uM), P.aeruginosa ATCC 27853 (MIC=10 uM) and X.citri (MIC&lt; 2 uM), and the Gram-positive bacterium S.aureus ATCC 29313 (MIC=20 uM). Does not have hemolytic activity against human erythrocytes. The sequence is that of Raniseptin-1 from Boana raniceps (Chaco tree frog).